Consider the following 924-residue polypeptide: 104 kDa microneme/rhoptry antigen (924 aa).

Residues 1–19 (MKFLILLFNILCLFPVLAA) form the signal peptide. The tract at residues 490–907 (SKKKLAPITE…KKPKKPDSAY (418 aa)) is disordered. 2 stretches are compositionally biased toward basic and acidic residues: residues 522–532 (PGDKEGSEGHK) and 573–588 (GPKD…EPRK). Low complexity predominate over residues 592-617 (PRTASPTRRPSPKLPQLSKLPKSTSP). Basic and acidic residues predominate over residues 653-673 (SFKEKFYDDYSKAASRSKETK). Residues 724-736 (SPSTSPSEFFTPP) show a composition bias toward low complexity. 3 stretches are compositionally biased toward basic and acidic residues: residues 737 to 747 (ESKRTRFHETP), 770 to 783 (KSPD…RSPS), and 816 to 825 (DPGRMAKDAS). Residues 857–867 (DDEGTEADDEE) are compositionally biased toward acidic residues. Basic and acidic residues predominate over residues 868 to 878 (THPPEERQKTE). The segment covering 879-901 (VRRRRPPKKPSKSPRPSKPKKPK) has biased composition (basic residues). A lipid anchor (GPI-anchor amidated aspartate) is attached at aspartate 904. A propeptide spans 905–924 (SAYIPSILAILVVSLIVGIL) (removed in mature form).

The protein resides in the cell membrane. In Theileria parva (East coast fever infection agent), this protein is 104 kDa microneme/rhoptry antigen.